The following is a 238-amino-acid chain: Ribonuclease PH (238 aa).

Residues R86 and 124 to 126 (GTR) contribute to the phosphate site.

The protein belongs to the RNase PH family. Homohexameric ring arranged as a trimer of dimers.

The enzyme catalyses tRNA(n+1) + phosphate = tRNA(n) + a ribonucleoside 5'-diphosphate. Functionally, phosphorolytic 3'-5' exoribonuclease that plays an important role in tRNA 3'-end maturation. Removes nucleotide residues following the 3'-CCA terminus of tRNAs; can also add nucleotides to the ends of RNA molecules by using nucleoside diphosphates as substrates, but this may not be physiologically important. Probably plays a role in initiation of 16S rRNA degradation (leading to ribosome degradation) during starvation. The polypeptide is Ribonuclease PH (Psychrobacter cryohalolentis (strain ATCC BAA-1226 / DSM 17306 / VKM B-2378 / K5)).